A 96-amino-acid chain; its full sequence is Citrate lyase acyl carrier protein (96 aa).

Residue Ser14 is modified to O-(phosphoribosyl dephospho-coenzyme A)serine.

Belongs to the CitD family. As to quaternary structure, oligomer with a subunit composition of (alpha,beta,gamma)6.

It is found in the cytoplasm. Covalent carrier of the coenzyme of citrate lyase. In Lactiplantibacillus plantarum (strain ATCC BAA-793 / NCIMB 8826 / WCFS1) (Lactobacillus plantarum), this protein is Citrate lyase acyl carrier protein.